Here is a 541-residue protein sequence, read N- to C-terminus: 3-oxoacyl-[acyl-carrier-protein] synthase II, chloroplastic (541 aa).

The transit peptide at 1–103 directs the protein to the chloroplast; that stretch reads MVGASSSYAS…NRNQRRLNRA (103 aa). Positions 129–539 constitute a Ketosynthase family 3 (KS3) domain; that stretch reads QRRVVVTGMG…GHNSSIIFAP (411 aa). Catalysis depends on for beta-ketoacyl synthase activity residues cysteine 292, histidine 432, and histidine 468.

The protein belongs to the thiolase-like superfamily. Beta-ketoacyl-ACP synthases family. As to quaternary structure, homodimer. In terms of tissue distribution, mostly expressed in siliques, and, to a lower extent, in leaves, stems, flower buds, and flowers.

Its subcellular location is the plastid. The protein resides in the chloroplast stroma. It catalyses the reaction a fatty acyl-[ACP] + malonyl-[ACP] + H(+) = a 3-oxoacyl-[ACP] + holo-[ACP] + CO2. Functionally, essential protein that catalyzes the condensation reaction of fatty acid synthesis by the addition to an acyl acceptor of two carbons from malonyl-ACP. Specific for elongation from C-16 and C-16 to unsaturated C-18 fatty acids. Confers resistance to low temperatures by maintaining chloroplast membranes integrity. Involved in the regulation of fatty acids ratios during seed metabolism. Required for embryo development, especially at the transition from the globular to the heart stage. The sequence is that of 3-oxoacyl-[acyl-carrier-protein] synthase II, chloroplastic (KAS2) from Arabidopsis thaliana (Mouse-ear cress).